A 276-amino-acid polypeptide reads, in one-letter code: Pantothenate synthetase (276 aa).

Residue 26–33 (MGFLHEGH) coordinates ATP. His33 (proton donor) is an active-site residue. Gln57 contacts (R)-pantoate. Gln57 serves as a coordination point for beta-alanine. 142–145 (GLKD) is an ATP binding site. Residue Gln148 coordinates (R)-pantoate. Residues Ile171 and 179 to 182 (KSSR) contribute to the ATP site.

This sequence belongs to the pantothenate synthetase family. As to quaternary structure, homodimer.

The protein localises to the cytoplasm. The enzyme catalyses (R)-pantoate + beta-alanine + ATP = (R)-pantothenate + AMP + diphosphate + H(+). It functions in the pathway cofactor biosynthesis; (R)-pantothenate biosynthesis; (R)-pantothenate from (R)-pantoate and beta-alanine: step 1/1. Its function is as follows. Catalyzes the condensation of pantoate with beta-alanine in an ATP-dependent reaction via a pantoyl-adenylate intermediate. This is Pantothenate synthetase from Exiguobacterium sibiricum (strain DSM 17290 / CCUG 55495 / CIP 109462 / JCM 13490 / 255-15).